Reading from the N-terminus, the 102-residue chain is Integration host factor subunit alpha (102 aa).

It belongs to the bacterial histone-like protein family. In terms of assembly, heterodimer of an alpha and a beta chain.

Its function is as follows. This protein is one of the two subunits of integration host factor, a specific DNA-binding protein that functions in genetic recombination as well as in transcriptional and translational control. In Buchnera aphidicola subsp. Acyrthosiphon pisum (strain 5A), this protein is Integration host factor subunit alpha.